Consider the following 873-residue polypeptide: Rho GTPase-activating protein gacJJ (873 aa).

A disordered region spans residues 64–147 (DEPSSINTSS…NVNNSSNAPT (84 aa)). Over residues 66–91 (PSSINTSSGNIGSNNNSSSNTPLTGS) the composition is skewed to low complexity. The segment covering 103-112 (IGGGGGGGDN) has biased composition (gly residues). The segment covering 113–144 (GITNSGNIGSSSNSDLKKSTSSGIVNVNNSSN) has biased composition (low complexity). Residues 301-402 (NPVREGYLKK…WTVLPIVIES (102 aa)) form the PH domain. Positions 428–621 (VPIEKTVSGN…SLIRDYQYIF (194 aa)) constitute a Rho-GAP domain. The SH3 domain maps to 628-694 (EQKILAKSLY…PASYVELLPH (67 aa)). Residues 715-761 (MLEMESTKTKNQEIDKNIKQLEITKKELESTINDLENEKAALENDPT) adopt a coiled-coil conformation.

It localises to the cytoplasm. In terms of biological role, rho GTPase-activating protein involved in the signal transduction pathway. The sequence is that of Rho GTPase-activating protein gacJJ (gacJJ) from Dictyostelium discoideum (Social amoeba).